A 192-amino-acid polypeptide reads, in one-letter code: Small ribosomal subunit protein eS7 (192 aa).

It belongs to the eukaryotic ribosomal protein eS7 family.

This chain is Small ribosomal subunit protein eS7 (RpS7), found in Anopheles gambiae (African malaria mosquito).